The chain runs to 569 residues: Cytosolic purine 5'-nucleotidase (569 aa).

The Nucleophile role is filled by Asp-52. IMP is bound by residues Asp-52 and Asp-54. 2 residues coordinate Mg(2+): Asp-52 and Asp-54. Asp-54 (proton donor) is an active-site residue. The ATP site is built by Arg-144 and Asn-154. Residues Arg-202, Asp-206, Lys-215, Thr-249, Asn-250, Ser-251, and Lys-292 each contribute to the IMP site. Residue Asp-351 participates in Mg(2+) binding. Positions 453 and 456 each coordinate ATP. The disordered stretch occupies residues 527–569; sequence SISEIKPPNLFPQAPQEITHCHDEDDDEEEEEEEVEEEEEEEE. Positions 548 to 569 are required for tetramer assembly; sequence HDEDDDEEEEEEEVEEEEEEEE. The span at 550 to 569 shows a compositional bias: acidic residues; sequence EDDDEEEEEEEVEEEEEEEE.

This sequence belongs to the 5'(3')-deoxyribonucleotidase family. In terms of assembly, homotetramer. Requires Mg(2+) as cofactor.

It localises to the cytoplasm. The protein resides in the cytosol. The catalysed reaction is a ribonucleoside 5'-phosphate + H2O = a ribonucleoside + phosphate. It catalyses the reaction a 2'-deoxyribonucleoside + a ribonucleoside 5'-phosphate = a ribonucleoside + a 2'-deoxyribonucleoside 5'-phosphate. The enzyme catalyses IMP + H2O = inosine + phosphate. It carries out the reaction GMP + H2O = guanosine + phosphate. The catalysed reaction is dGMP + H2O = 2'-deoxyguanosine + phosphate. It catalyses the reaction dIMP + H2O = 2'-deoxyinosine + phosphate. The enzyme catalyses XMP + H2O = xanthosine + phosphate. It carries out the reaction inosine + GMP = guanosine + IMP. The catalysed reaction is dGMP + inosine = 2'-deoxyguanosine + IMP. It catalyses the reaction dIMP + inosine = 2'-deoxyinosine + IMP. The enzyme catalyses inosine + UMP = uridine + IMP. It carries out the reaction inosine + CMP = cytidine + IMP. The catalysed reaction is inosine + AMP = IMP + adenosine. Its activity is regulated as follows. Allosterically activated by various compounds including ATP, 2,3-BPG/2,3-Bisphosphoglyceric acid and Ap4A/P1,P4-bis(5'-adenosyl) tetraphosphate. Binding of an allosteric activator is a prerequisiste to magnesium and substrate binding. Inhibited by inorganic phosphate. Inhibited by inosine, guanosine, p-chloromercuribenzoate and NaF. Broad specificity cytosolic 5'-nucleotidase that catalyzes the dephosphorylation of 6-hydroxypurine nucleoside 5'-monophosphates. In addition, possesses a phosphotransferase activity by which it can transfer a phosphate from a donor nucleoside monophosphate to an acceptor nucleoside, preferably inosine, deoxyinosine and guanosine. Has the highest activities for IMP and GMP followed by dIMP, dGMP and XMP. Could also catalyze the transfer of phosphates from pyrimidine monophosphates but with lower efficiency. Through these activities regulates the purine nucleoside/nucleotide pools within the cell. The protein is Cytosolic purine 5'-nucleotidase (NT5C2) of Gallus gallus (Chicken).